Reading from the N-terminus, the 903-residue chain is MAKTRVYELAKELKVTNKDLIDTMARLGIYTRSHMSVLENGEVIKVRNHYRQQWRAAKLARMHREQATLKGEGPVPTRGVPDAPRAEEVPSRQVPAPETGAPAQATGATRQPATGSARPANTDETRVQEHKPATAARQAGDAPAAEGTAAAGQPLDGKELRQAVANGQGTEEPRQQPAATGQRAQGGEAGRGQQSRQKKKRRGEGRSRQDENKGSAREDQANRFATRDKEAAPSAGQQSPAEKGQRRPAHSKPLRIPKPPEAVTKDLPEKRRDRSNARPGAKPAESGRSRKREMENQLEERLMRRDKNKGKAQKHKETPKVVFKITLTGSITVQELAKRIGKTAAEVIKYLMGQGIMATINQELDLETAALVAQDLGAIVEIKAEKPITELEDLVDPPETLRERPPVVTVMGHVDHGKTSLLDAIRRTNVTASEAGGITQHIGAYQVRLKNRKITFLDTPGHAAFTAMRARGAQATDIAILVVAADDGVMPQTIEAINHAKAAGVPIVVAINKIDRPEANPERVKQQLTEYGLVPEEWGGDTIMVPVSAVTKEGINDLLEMVLLTADVAELKANPDRPARGIVIEAKLDRGRGPVATMLVQKGTLKIGDNLVAGSVYGRVRAMIDDRGERVNSAPPSTPVEVLGLSELPEAGDIFQVVEDEKLARQIASSRQEEKRQEELKAASKTTLDDLFKQMEAGEVKELNLVIKGDVQGSVEALRGALEQLSTSEVKVNLLHGGVGAITETDVMLAAASKAIIIGFNVRPEANVRKAAEEAGVEIRLYRVIYEVIDDVKAAMSGLLEPEEREVILGRAEVRATFKVPKAGTVAGCFVTEGKIQNRALARVIRDGVVVFEGRIESLKRFKDDVREVAQGYECGVGLEKFNDIKEGDVIEAYTIEEIQREL.

Residues 66–296 (QATLKGEGPV…GRSRKREMEN (231 aa)) form a disordered region. Over residues 121–132 (NTDETRVQEHKP) the composition is skewed to basic and acidic residues. Composition is skewed to low complexity over residues 139–152 (AGDA…AAAG) and 178–195 (AATG…GQQS). The span at 204 to 231 (EGRSRQDENKGSAREDQANRFATRDKEA) shows a compositional bias: basic and acidic residues. Positions 246-255 (RRPAHSKPLR) are enriched in basic residues. Composition is skewed to basic and acidic residues over residues 263-276 (VTKD…DRSN) and 285-296 (ESGRSRKREMEN). The 170-residue stretch at 403-572 (ERPPVVTVMG…LLTADVAELK (170 aa)) folds into the tr-type G domain. The segment at 412 to 419 (GHVDHGKT) is G1. A GTP-binding site is contributed by 412–419 (GHVDHGKT). Positions 437 to 441 (GITQH) are G2. The segment at 458–461 (DTPG) is G3. Residues 458-462 (DTPGH) and 512-515 (NKID) each bind GTP. The segment at 512 to 515 (NKID) is G4. The segment at 548–550 (SAV) is G5.

This sequence belongs to the TRAFAC class translation factor GTPase superfamily. Classic translation factor GTPase family. IF-2 subfamily.

The protein localises to the cytoplasm. Its function is as follows. One of the essential components for the initiation of protein synthesis. Protects formylmethionyl-tRNA from spontaneous hydrolysis and promotes its binding to the 30S ribosomal subunits. Also involved in the hydrolysis of GTP during the formation of the 70S ribosomal complex. The sequence is that of Translation initiation factor IF-2 from Moorella thermoacetica (strain ATCC 39073 / JCM 9320).